The primary structure comprises 290 residues: UPF0761 membrane protein YihY (290 aa).

6 helical membrane-spanning segments follow: residues 44-64, 104-124, 140-160, 183-203, 210-230, and 244-264; these read LLSL…FPMF, VGAC…DSAL, FAVY…SLAI, IFPL…VPTI, AIVG…GFAL, and VLAV…IVLL.

This sequence belongs to the UPF0761 family.

The protein resides in the cell inner membrane. The sequence is that of UPF0761 membrane protein YihY from Shigella sonnei (strain Ss046).